Here is a 459-residue protein sequence, read N- to C-terminus: Spermatogenesis-associated protein 1 (459 aa).

Positions 193 to 205 (LKELPNKNQEEAG) are enriched in basic and acidic residues. The segment at 193–213 (LKELPNKNQEEAGGKATAEKS) is disordered. Coiled coils occupy residues 287–374 (TDIS…YKKL) and 400–453 (LIIQ…KKII).

As to quaternary structure, interacts with IFT20.

It localises to the cytoplasmic vesicle. It is found in the secretory vesicle. The protein localises to the acrosome. This is Spermatogenesis-associated protein 1 (SPATA1) from Homo sapiens (Human).